Consider the following 414-residue polypeptide: Arginine deiminase (414 aa).

Cysteine 402 (amidino-cysteine intermediate) is an active-site residue.

Belongs to the arginine deiminase family.

The protein localises to the cytoplasm. It catalyses the reaction L-arginine + H2O = L-citrulline + NH4(+). It functions in the pathway amino-acid degradation; L-arginine degradation via ADI pathway; carbamoyl phosphate from L-arginine: step 1/2. In Oenococcus oeni (strain ATCC BAA-331 / PSU-1), this protein is Arginine deiminase.